The following is a 785-amino-acid chain: Endonuclease MutS2 (785 aa).

An ATP-binding site is contributed by 332–339 (GPNTGGKT). The Smr domain occupies 710 to 785 (IDLRGLDAEE…GDGATIVELK (76 aa)).

It belongs to the DNA mismatch repair MutS family. MutS2 subfamily. As to quaternary structure, homodimer. Binds to stalled ribosomes, contacting rRNA.

Functionally, endonuclease that is involved in the suppression of homologous recombination and thus may have a key role in the control of bacterial genetic diversity. In terms of biological role, acts as a ribosome collision sensor, splitting the ribosome into its 2 subunits. Detects stalled/collided 70S ribosomes which it binds and splits by an ATP-hydrolysis driven conformational change. Acts upstream of the ribosome quality control system (RQC), a ribosome-associated complex that mediates the extraction of incompletely synthesized nascent chains from stalled ribosomes and their subsequent degradation. Probably generates substrates for RQC. In Clostridium botulinum (strain Alaska E43 / Type E3), this protein is Endonuclease MutS2.